We begin with the raw amino-acid sequence, 218 residues long: MANSSPVYDWFQERLEIQDIADDIGTKYVPPHVNIFYCLGGITLVCFLIQFATGFAMTFYYKPTVAEAYTSVQYLMTDVSFGWLIRSVHRWSASMMVLMLILHVFRVYLTGGFKRPRELTWVTGVTMAVITVSFGVTGYSLPWDQVGYWAVKIVSGVPAAIPVVGDFMVELLRGGESVGQATLTRFYSLHTFVMPWLLAVFMLMHFLMIRKQGISGPL.

A helical transmembrane segment spans residues 35–55 (IFYCLGGITLVCFLIQFATGF). A heme c-binding site is contributed by Cys38. The heme b site is built by His89 and His103. A run of 3 helical transmembrane segments spans residues 93–113 (ASMM…TGGF), 119–139 (LTWV…VTGY), and 189–209 (LHTF…FLMI). The heme b site is built by His190 and His205.

The protein belongs to the cytochrome b family. PetB subfamily. As to quaternary structure, the 4 large subunits of the cytochrome b6-f complex are cytochrome b6, subunit IV (17 kDa polypeptide, PetD), cytochrome f and the Rieske protein, while the 4 small subunits are PetG, PetL, PetM and PetN. The complex functions as a dimer. Heme b serves as cofactor. Heme c is required as a cofactor.

Its subcellular location is the cellular thylakoid membrane. In terms of biological role, component of the cytochrome b6-f complex, which mediates electron transfer between photosystem II (PSII) and photosystem I (PSI), cyclic electron flow around PSI, and state transitions. This is Cytochrome b6 from Synechococcus sp. (strain CC9902).